The primary structure comprises 164 residues: Ribosome maturation factor RimM (164 aa).

The region spanning 90–161 (KGSYFIADLI…TVTIKPLEIW (72 aa)) is the PRC barrel domain.

It belongs to the RimM family. As to quaternary structure, binds ribosomal protein uS19.

It localises to the cytoplasm. Its function is as follows. An accessory protein needed during the final step in the assembly of 30S ribosomal subunit, possibly for assembly of the head region. Essential for efficient processing of 16S rRNA. May be needed both before and after RbfA during the maturation of 16S rRNA. It has affinity for free ribosomal 30S subunits but not for 70S ribosomes. The protein is Ribosome maturation factor RimM of Clostridium botulinum (strain Langeland / NCTC 10281 / Type F).